The chain runs to 217 residues: Pyridoxine/pyridoxamine 5'-phosphate oxidase (217 aa).

Residues 13-16 and lysine 71 contribute to the substrate site; that span reads RREY. FMN-binding positions include 66 to 71, 81 to 82, arginine 87, lysine 88, and glutamine 110; these read RTVLLK and YT. Residues tyrosine 128, arginine 132, and serine 136 each contribute to the substrate site. Residues 145–146 and tryptophan 190 contribute to the FMN site; that span reads QS. 196–198 provides a ligand contact to substrate; the sequence is RLH. Arginine 200 lines the FMN pocket.

The protein belongs to the pyridoxamine 5'-phosphate oxidase family. Homodimer. It depends on FMN as a cofactor.

The enzyme catalyses pyridoxamine 5'-phosphate + O2 + H2O = pyridoxal 5'-phosphate + H2O2 + NH4(+). It carries out the reaction pyridoxine 5'-phosphate + O2 = pyridoxal 5'-phosphate + H2O2. It functions in the pathway cofactor metabolism; pyridoxal 5'-phosphate salvage; pyridoxal 5'-phosphate from pyridoxamine 5'-phosphate: step 1/1. It participates in cofactor metabolism; pyridoxal 5'-phosphate salvage; pyridoxal 5'-phosphate from pyridoxine 5'-phosphate: step 1/1. In terms of biological role, catalyzes the oxidation of either pyridoxine 5'-phosphate (PNP) or pyridoxamine 5'-phosphate (PMP) into pyridoxal 5'-phosphate (PLP). This is Pyridoxine/pyridoxamine 5'-phosphate oxidase from Rubrobacter xylanophilus (strain DSM 9941 / JCM 11954 / NBRC 16129 / PRD-1).